Here is a 132-residue protein sequence, read N- to C-terminus: DNA-directed RNA polymerase subunit omega (132 aa).

This sequence belongs to the RNA polymerase subunit omega family. The RNAP catalytic core consists of 2 alpha, 1 beta, 1 beta' and 1 omega subunit. When a sigma factor is associated with the core the holoenzyme is formed, which can initiate transcription.

It carries out the reaction RNA(n) + a ribonucleoside 5'-triphosphate = RNA(n+1) + diphosphate. Its function is as follows. Promotes RNA polymerase assembly. Latches the N- and C-terminal regions of the beta' subunit thereby facilitating its interaction with the beta and alpha subunits. The protein is DNA-directed RNA polymerase subunit omega of Bartonella bacilliformis (strain ATCC 35685 / KC583 / Herrer 020/F12,63).